We begin with the raw amino-acid sequence, 146 residues long: Protein STIG1 (146 aa).

An N-terminal signal peptide occupies residues Met1–Ser23. N-linked (GlcNAc...) asparagine glycans are attached at residues Asn31, Asn61, and Asn84.

This sequence belongs to the STIG1 family. In terms of processing, glycosylated. In terms of tissue distribution, expressed exclusively in the stigmatic secretory zone.

The protein resides in the secreted. In terms of biological role, involved in the temporal regulation of the exudate secretion onto the stigma. The polypeptide is Protein STIG1 (Nicotiana tabacum (Common tobacco)).